Reading from the N-terminus, the 1111-residue chain is Protein STU1 (1111 aa).

2 HEAT repeats span residues 95 to 133 (ALPLIVEKLGDQKEKFRQLASQALATLYKVAPVEVERSV) and 167 to 205 (YVPTMMELLEDADGMVRDVAKSTVIELFRNAPGPAKSDL). Disordered regions lie at residues 225–245 (ELNPTSSAPASQPDPESVEPS) and 476–751 (RLLQ…VDEE). The segment covering 502–511 (SKSTMGTSKP) has biased composition (polar residues). A compositionally biased stretch (basic and acidic residues) spans 704–714 (PREEQRFVKPV).

Belongs to the CLASP family. In terms of assembly, interacts with microtubules.

It localises to the cytoplasm. The protein resides in the cytoskeleton. It is found in the nucleus. The protein localises to the spindle. Its function is as follows. Microtubule binding protein that promotes the stabilization of dynamic microtubules. Required for mitotic spindle formation. This Chaetomium globosum (strain ATCC 6205 / CBS 148.51 / DSM 1962 / NBRC 6347 / NRRL 1970) (Soil fungus) protein is Protein STU1 (STU1).